We begin with the raw amino-acid sequence, 198 residues long: Prolactin (198 aa).

Cystine bridges form between C4/C11, C58/C173, and C190/C198.

It belongs to the somatotropin/prolactin family. As to expression, pituitary gland.

It localises to the secreted. In Chelonia mydas (Green sea-turtle), this protein is Prolactin.